The primary structure comprises 115 residues: DNA-directed RNA polymerase subunit Rpo4 (115 aa).

Belongs to the eukaryotic RPB4 RNA polymerase subunit family. As to quaternary structure, part of the RNA polymerase complex. Forms a stalk with Rpo7 that extends from the main structure.

It localises to the cytoplasm. The catalysed reaction is RNA(n) + a ribonucleoside 5'-triphosphate = RNA(n+1) + diphosphate. DNA-dependent RNA polymerase (RNAP) catalyzes the transcription of DNA into RNA using the four ribonucleoside triphosphates as substrates. This subunit is less well bound than the others. This chain is DNA-directed RNA polymerase subunit Rpo4, found in Methanocaldococcus jannaschii (strain ATCC 43067 / DSM 2661 / JAL-1 / JCM 10045 / NBRC 100440) (Methanococcus jannaschii).